The following is a 325-amino-acid chain: Tryptophan--tRNA ligase (325 aa).

Residues 9 to 11 (QPS) and 17 to 18 (GN) contribute to the ATP site. The short motif at 10–18 (PSGILHIGN) is the 'HIGH' region element. An L-tryptophan-binding site is contributed by Asp132. ATP is bound by residues 144 to 146 (GKD), Val184, and 191 to 195 (KMSKS). The 'KMSKS' region motif lies at 191–195 (KMSKS).

Belongs to the class-I aminoacyl-tRNA synthetase family. Homodimer.

The protein localises to the cytoplasm. It carries out the reaction tRNA(Trp) + L-tryptophan + ATP = L-tryptophyl-tRNA(Trp) + AMP + diphosphate + H(+). Its function is as follows. Catalyzes the attachment of tryptophan to tRNA(Trp). This is Tryptophan--tRNA ligase from Fusobacterium nucleatum subsp. nucleatum (strain ATCC 25586 / DSM 15643 / BCRC 10681 / CIP 101130 / JCM 8532 / KCTC 2640 / LMG 13131 / VPI 4355).